The following is a 259-amino-acid chain: Thiamine thiazole synthase (259 aa).

NAD(+) contacts are provided by residues A33, 52–53 (ER), G60, V124, and 152–154 (HVD). Fe cation-binding residues include D154 and H169. An NAD(+)-binding site is contributed by M219. Residue R229 coordinates glycine.

The protein belongs to the THI4 family. Homooctamer; tetramer of dimers. Fe(2+) is required as a cofactor.

The enzyme catalyses hydrogen sulfide + glycine + NAD(+) = ADP-5-ethyl-4-methylthiazole-2-carboxylate + nicotinamide + 3 H2O + H(+). It participates in cofactor biosynthesis; thiamine diphosphate biosynthesis. In terms of biological role, involved in the biosynthesis of the thiazole moiety of thiamine. Catalyzes the conversion of NAD and glycine to adenosine diphosphate 5-(2-hydroxyethyl)-4-methylthiazole-2-carboxylate (ADT), an adenylated thiazole intermediate, using free sulfide as a source of sulfur. The chain is Thiamine thiazole synthase from Pyrobaculum neutrophilum (strain DSM 2338 / JCM 9278 / NBRC 100436 / V24Sta) (Thermoproteus neutrophilus).